We begin with the raw amino-acid sequence, 108 residues long: Structural protein 1 (108 aa).

Residues 1–20 (MSRVSEYGVPEGVRESDSDT) form a disordered region. The Intravirion segment spans residues 1 to 77 (MSRVSEYGVP…LKMQMDRLCN (77 aa)). The chain crosses the membrane as a helical; Signal-anchor for type II membrane protein span at residues 78–98 (VLGVVLQMATLALVTYIAFVV). At 99–108 (HTRATSCKRE) the chain is on the virion surface side.

It belongs to the varicellovirus ORF1 protein family. In terms of assembly, homodimer. In terms of processing, phosphorylated.

The protein resides in the virion membrane. It localises to the host Golgi apparatus membrane. The polypeptide is Structural protein 1 (Varicella-zoster virus (strain Dumas) (HHV-3)).